We begin with the raw amino-acid sequence, 196 residues long: Holliday junction branch migration complex subunit RuvA (196 aa).

The interval 1-63 (MLDFIKGEIV…EETHQLFGFI (63 aa)) is domain I. Residues 64 to 142 (DKKERQLFTH…PDNIPSSDTI (79 aa)) are domain II. Residues 143–146 (ITNI) form a flexible linker region. Residues 146–196 (ISSNITKEAITALITLGFSQSASQKVVNKIVSNNSSSTTIEQIIKKALKLL) form a domain III region.

It belongs to the RuvA family. In terms of assembly, homotetramer. Forms an RuvA(8)-RuvB(12)-Holliday junction (HJ) complex. HJ DNA is sandwiched between 2 RuvA tetramers; dsDNA enters through RuvA and exits via RuvB. An RuvB hexamer assembles on each DNA strand where it exits the tetramer. Each RuvB hexamer is contacted by two RuvA subunits (via domain III) on 2 adjacent RuvB subunits; this complex drives branch migration. In the full resolvosome a probable DNA-RuvA(4)-RuvB(12)-RuvC(2) complex forms which resolves the HJ.

The protein resides in the cytoplasm. The RuvA-RuvB-RuvC complex processes Holliday junction (HJ) DNA during genetic recombination and DNA repair, while the RuvA-RuvB complex plays an important role in the rescue of blocked DNA replication forks via replication fork reversal (RFR). RuvA specifically binds to HJ cruciform DNA, conferring on it an open structure. The RuvB hexamer acts as an ATP-dependent pump, pulling dsDNA into and through the RuvAB complex. HJ branch migration allows RuvC to scan DNA until it finds its consensus sequence, where it cleaves and resolves the cruciform DNA. This chain is Holliday junction branch migration complex subunit RuvA, found in Azobacteroides pseudotrichonymphae genomovar. CFP2.